The chain runs to 357 residues: UDP-N-acetylglucosamine--N-acetylmuramyl-(pentapeptide) pyrophosphoryl-undecaprenol N-acetylglucosamine transferase (357 aa).

Residues 15-17, asparagine 125, serine 190, and glutamine 290 contribute to the UDP-N-acetyl-alpha-D-glucosamine site; that span reads SGG.

The protein belongs to the glycosyltransferase 28 family. MurG subfamily.

It is found in the cell inner membrane. The enzyme catalyses di-trans,octa-cis-undecaprenyl diphospho-N-acetyl-alpha-D-muramoyl-L-alanyl-D-glutamyl-meso-2,6-diaminopimeloyl-D-alanyl-D-alanine + UDP-N-acetyl-alpha-D-glucosamine = di-trans,octa-cis-undecaprenyl diphospho-[N-acetyl-alpha-D-glucosaminyl-(1-&gt;4)]-N-acetyl-alpha-D-muramoyl-L-alanyl-D-glutamyl-meso-2,6-diaminopimeloyl-D-alanyl-D-alanine + UDP + H(+). It functions in the pathway cell wall biogenesis; peptidoglycan biosynthesis. Functionally, cell wall formation. Catalyzes the transfer of a GlcNAc subunit on undecaprenyl-pyrophosphoryl-MurNAc-pentapeptide (lipid intermediate I) to form undecaprenyl-pyrophosphoryl-MurNAc-(pentapeptide)GlcNAc (lipid intermediate II). This chain is UDP-N-acetylglucosamine--N-acetylmuramyl-(pentapeptide) pyrophosphoryl-undecaprenol N-acetylglucosamine transferase, found in Chlamydia pneumoniae (Chlamydophila pneumoniae).